Reading from the N-terminus, the 231-residue chain is Orotidine 5'-phosphate decarboxylase (231 aa).

Substrate contacts are provided by residues D9, K34, 62 to 71, T117, R179, Q188, G208, and R209; that span reads DLKLHDIPSV. Residue K64 is the Proton donor of the active site.

It belongs to the OMP decarboxylase family. Type 1 subfamily. In terms of assembly, homodimer.

It carries out the reaction orotidine 5'-phosphate + H(+) = UMP + CO2. The protein operates within pyrimidine metabolism; UMP biosynthesis via de novo pathway; UMP from orotate: step 2/2. Catalyzes the decarboxylation of orotidine 5'-monophosphate (OMP) to uridine 5'-monophosphate (UMP). The polypeptide is Orotidine 5'-phosphate decarboxylase (Aquifex aeolicus (strain VF5)).